The sequence spans 274 residues: Membrane protein insertase YidC 2 (274 aa).

The first 20 residues, 1–20 (MKKKLKLTSLLGLSLLIMTA), serve as a signal peptide directing secretion. Residue Cys-21 is the site of N-palmitoyl cysteine attachment. Cys-21 carries S-diacylglycerol cysteine lipidation. The next 4 helical transmembrane spans lie at 56 to 76 (ISIGVGIILFTVLIRTVLLPV), 128 to 148 (SDSLWPILIQMPVILALFQAL), 167 to 187 (VDTTLVLPILAAVFTFLSTWL), and 205 to 225 (GIPVLIFIFAVYAPGGVALYW).

The protein belongs to the OXA1/ALB3/YidC family. Type 2 subfamily.

It localises to the cell membrane. Its function is as follows. Required for the insertion and/or proper folding and/or complex formation of integral membrane proteins into the membrane. Involved in integration of membrane proteins that insert both dependently and independently of the Sec translocase complex, as well as at least some lipoproteins. The sequence is that of Membrane protein insertase YidC 2 from Streptococcus pneumoniae serotype 4 (strain ATCC BAA-334 / TIGR4).